The sequence spans 248 residues: Ubiquinone biosynthesis O-methyltransferase (248 aa).

S-adenosyl-L-methionine-binding residues include R41, G72, D93, and M136.

This sequence belongs to the methyltransferase superfamily. UbiG/COQ3 family.

It catalyses the reaction a 3-demethylubiquinol + S-adenosyl-L-methionine = a ubiquinol + S-adenosyl-L-homocysteine + H(+). The catalysed reaction is a 3-(all-trans-polyprenyl)benzene-1,2-diol + S-adenosyl-L-methionine = a 2-methoxy-6-(all-trans-polyprenyl)phenol + S-adenosyl-L-homocysteine + H(+). The protein operates within cofactor biosynthesis; ubiquinone biosynthesis. Functionally, O-methyltransferase that catalyzes the 2 O-methylation steps in the ubiquinone biosynthetic pathway. This Rhizobium johnstonii (strain DSM 114642 / LMG 32736 / 3841) (Rhizobium leguminosarum bv. viciae) protein is Ubiquinone biosynthesis O-methyltransferase.